The sequence spans 104 residues: Small ribosomal subunit protein bS6 (104 aa).

Belongs to the bacterial ribosomal protein bS6 family.

Its function is as follows. Binds together with bS18 to 16S ribosomal RNA. The protein is Small ribosomal subunit protein bS6 of Elusimicrobium minutum (strain Pei191).